A 408-amino-acid polypeptide reads, in one-letter code: Peptidase T (408 aa).

Histidine 78 is a binding site for Zn(2+). Aspartate 80 is an active-site residue. A Zn(2+)-binding site is contributed by aspartate 140. Glutamate 174 acts as the Proton acceptor in catalysis. Positions 175, 197, and 379 each coordinate Zn(2+).

This sequence belongs to the peptidase M20B family. Zn(2+) serves as cofactor.

It localises to the cytoplasm. The enzyme catalyses Release of the N-terminal residue from a tripeptide.. Functionally, cleaves the N-terminal amino acid of tripeptides. This chain is Peptidase T, found in Staphylococcus aureus (strain MRSA252).